A 247-amino-acid chain; its full sequence is uncharacterized protein (247 aa).

Residues 1–35 (MWGPGVTAEGLSVAPAPPPLLPLLLLLALALVAPS) form the signal peptide. The helical transmembrane segment at 82-102 (LSGLLILLVLFAIGYFLQRII) threads the bilayer. Positions 109–176 (YPRGQARPGQ…RGSGGRLPPS (68 aa)) are disordered. Residues 111–120 (RGQARPGQAR) are compositionally biased toward low complexity. Positions 161 to 171 (SGGGRGRGSGG) are enriched in gly residues.

It localises to the membrane. This is an uncharacterized protein from Mus musculus (Mouse).